We begin with the raw amino-acid sequence, 314 residues long: Secreted frizzled-related protein 5 (314 aa).

Residues 1–21 (MWVAWSARTAALALLLGALHG) form the signal peptide. One can recognise an FZ domain in the interval 45–162 (SKPPQCLDIP…PLDNDLCIAV (118 aa)). Disulfide bonds link cysteine 50/cysteine 113, cysteine 60/cysteine 106, cysteine 97/cysteine 132, cysteine 121/cysteine 159, cysteine 125/cysteine 149, cysteine 178/cysteine 250, cysteine 181/cysteine 252, and cysteine 195/cysteine 300. Residues 178–300 (CAQCEMEHSA…AVKFMFSYPC (123 aa)) form the NTR domain.

Belongs to the secreted frizzled-related protein (sFRP) family.

It is found in the secreted. Its function is as follows. Soluble frizzled-related proteins (sFRPS) function as modulators of Wnt signaling through direct interaction with Wnts. They have a role in regulating cell growth and differentiation in specific cell types. SFRP5 may be involved in determining the polarity of photoreceptor, and perhaps, other cells in the retina. This chain is Secreted frizzled-related protein 5 (Sfrp5), found in Mus musculus (Mouse).